The chain runs to 802 residues: Pyrophosphate-energized membrane proton pump 3 (802 aa).

The next 6 membrane-spanning stretches (helical) occupy residues 41 to 61 (LNVR…FYMG), 66 to 86 (PIIV…VYLT), 118 to 138 (YGTI…IYLF), 160 to 180 (VAAF…GMWV), 206 to 226 (AGGF…AILY), and 246 to 266 (LPLL…FAQL). K273 serves as a coordination point for substrate. Mg(2+) is bound by residues D276, D280, and D306. Helical transmembrane passes span 348–368 (FILF…IGIL), 386–406 (MVVL…TFGA), 421–441 (WLNF…FVWI), 468–491 (IIAG…VAII), and 511–531 (GGLF…AYVL). The Mg(2+) site is built by D541 and N568. Helical transmembrane passes span 577–597 (FAIG…MDEV), 615–635 (VFIG…WACA), 686–706 (GALA…LGYY), and 716–736 (VVAA…LFLN). D743 and D773 together coordinate Mg(2+). K776 is a substrate binding site. Residues 782 to 802 (SIHVLIKMLATITLVMAPIFL) traverse the membrane as a helical segment.

It belongs to the H(+)-translocating pyrophosphatase (TC 3.A.10) family. K(+)-insensitive subfamily. As to quaternary structure, monomer.

It localises to the golgi apparatus membrane. The catalysed reaction is diphosphate + H2O + H(+)(in) = 2 phosphate + 2 H(+)(out). The polypeptide is Pyrophosphate-energized membrane proton pump 3 (AVPL2) (Arabidopsis thaliana (Mouse-ear cress)).